Reading from the N-terminus, the 138-residue chain is Acidic phospholipase A2 DsM-a2/DsM-a2' (138 aa).

The first 16 residues, 1-16 (MRTLWIVAVCLIGVEG), serve as a signal peptide directing secretion. 7 cysteine pairs are disulfide-bonded: Cys42/Cys131, Cys44/Cys60, Cys59/Cys111, Cys65/Cys138, Cys66/Cys104, Cys73/Cys97, and Cys91/Cys102. Ca(2+)-binding residues include Tyr43, Gly45, and Gly47. Residue His63 is part of the active site. Position 64 (Asp64) interacts with Ca(2+). The active site involves Asp105.

This sequence belongs to the phospholipase A2 family. Group II subfamily. D49 sub-subfamily. Ca(2+) is required as a cofactor. As to expression, expressed by the venom gland.

It is found in the secreted. The enzyme catalyses a 1,2-diacyl-sn-glycero-3-phosphocholine + H2O = a 1-acyl-sn-glycero-3-phosphocholine + a fatty acid + H(+). Functionally, exhibits high hydrolytic activities and shows strong preference for the anionic micelles (dPPC with deoxycholate) to the zwitterionic micelles (dPPC with Triton X-100). PLA2 catalyzes the calcium-dependent hydrolysis of the 2-acyl groups in 3-sn-phosphoglycerides. The chain is Acidic phospholipase A2 DsM-a2/DsM-a2' from Daboia siamensis (Eastern Russel's viper).